A 35-amino-acid polypeptide reads, in one-letter code: UPF0387 membrane protein YohO (35 aa).

The chain crosses the membrane as a helical span at residues 6–26 (IGVIALFLFMALGGIGGVMLA).

It belongs to the UPF0387 family.

It localises to the cell inner membrane. The chain is UPF0387 membrane protein YohO from Shigella boydii serotype 4 (strain Sb227).